Here is a 376-residue protein sequence, read N- to C-terminus: Metal tolerance protein 6 (376 aa).

The segment at 1–28 (MAAAAGVAAGTGRGSGEGEELLPNAVEG) is disordered. The Cytoplasmic portion of the chain corresponds to 1 to 123 (MAAAAGVAAG…CEKVARSEAL (123 aa)). The helical transmembrane segment at 124–144 (AIRLSNIANMVLFAAKVYASI) threads the bilayer. Residues 145–149 (RSGSL) are Vacuolar-facing. A helical membrane pass occupies residues 150–170 (AIIASTLDSLLDLLSGFILWF). The Cytoplasmic portion of the chain corresponds to 171-191 (TAFSKKTSNPYRYPIGKRRMQ). The chain crosses the membrane as a helical span at residues 192–212 (PLGILVFASVMATLGLQIILE). At 213 to 231 (STRSLFYDGDTFRLTKEQE) the chain is on the vacuolar side. A helical transmembrane segment spans residues 232–252 (KWVVDIMLSVTSVKLLLVVYC). At 253 to 376 (RSFTNEILAI…PEHARSHDTL (124 aa)) the chain is on the cytoplasmic side.

The protein belongs to the cation diffusion facilitator (CDF) transporter (TC 2.A.4) family. SLC30A subfamily.

It is found in the vacuole membrane. In terms of biological role, involved in sequestration of excess metal in the cytoplasm into vacuoles to maintain metal homeostasis. This chain is Metal tolerance protein 6 (MTP6), found in Oryza sativa subsp. japonica (Rice).